We begin with the raw amino-acid sequence, 335 residues long: tRNA N6-adenosine threonylcarbamoyltransferase (335 aa).

Residues H110 and H114 each coordinate Fe cation. Substrate-binding positions include L132–G136, D165, G178, and N271. D299 serves as a coordination point for Fe cation.

The protein belongs to the KAE1 / TsaD family. Fe(2+) serves as cofactor.

The protein localises to the cytoplasm. The catalysed reaction is L-threonylcarbamoyladenylate + adenosine(37) in tRNA = N(6)-L-threonylcarbamoyladenosine(37) in tRNA + AMP + H(+). Its function is as follows. Required for the formation of a threonylcarbamoyl group on adenosine at position 37 (t(6)A37) in tRNAs that read codons beginning with adenine. Is involved in the transfer of the threonylcarbamoyl moiety of threonylcarbamoyl-AMP (TC-AMP) to the N6 group of A37, together with TsaE and TsaB. TsaD likely plays a direct catalytic role in this reaction. The chain is tRNA N6-adenosine threonylcarbamoyltransferase from Campylobacter jejuni subsp. jejuni serotype O:6 (strain 81116 / NCTC 11828).